A 379-amino-acid polypeptide reads, in one-letter code: Homoserine O-succinyltransferase (379 aa).

An AB hydrolase-1 domain is found at 48 to 357; that stretch reads NAVLICHALS…SAHGHDAFLM (310 aa). The active-site Nucleophile is the S154. R224 is a substrate binding site. Catalysis depends on residues D319 and H352. D353 lines the substrate pocket.

It belongs to the AB hydrolase superfamily. MetX family. As to quaternary structure, homodimer.

It localises to the cytoplasm. The catalysed reaction is L-homoserine + succinyl-CoA = O-succinyl-L-homoserine + CoA. It participates in amino-acid biosynthesis; L-methionine biosynthesis via de novo pathway; O-succinyl-L-homoserine from L-homoserine: step 1/1. Functionally, transfers a succinyl group from succinyl-CoA to L-homoserine, forming succinyl-L-homoserine. The polypeptide is Homoserine O-succinyltransferase (Neisseria meningitidis serogroup A / serotype 4A (strain DSM 15465 / Z2491)).